The chain runs to 209 residues: Histidine biosynthesis bifunctional protein HisIE (209 aa).

The tract at residues 1–123 (MEIEKLLEQV…VLPIDYSLSI (123 aa)) is phosphoribosyl-AMP cyclohydrolase. The phosphoribosyl-ATP pyrophosphohydrolase stretch occupies residues 124 to 209 (LKELEEIIKR…VMNELRRRRK (86 aa)).

The protein in the N-terminal section; belongs to the PRA-CH family. It in the C-terminal section; belongs to the PRA-PH family.

It localises to the cytoplasm. It carries out the reaction 1-(5-phospho-beta-D-ribosyl)-ATP + H2O = 1-(5-phospho-beta-D-ribosyl)-5'-AMP + diphosphate + H(+). The enzyme catalyses 1-(5-phospho-beta-D-ribosyl)-5'-AMP + H2O = 1-(5-phospho-beta-D-ribosyl)-5-[(5-phospho-beta-D-ribosylamino)methylideneamino]imidazole-4-carboxamide. The protein operates within amino-acid biosynthesis; L-histidine biosynthesis; L-histidine from 5-phospho-alpha-D-ribose 1-diphosphate: step 2/9. It functions in the pathway amino-acid biosynthesis; L-histidine biosynthesis; L-histidine from 5-phospho-alpha-D-ribose 1-diphosphate: step 3/9. In Pyrococcus furiosus (strain ATCC 43587 / DSM 3638 / JCM 8422 / Vc1), this protein is Histidine biosynthesis bifunctional protein HisIE (hisI).